The sequence spans 256 residues: Thiazole synthase (256 aa).

The active-site Schiff-base intermediate with DXP is lysine 91. Residues glycine 152, 179 to 180 (AG), and 201 to 202 (NT) contribute to the 1-deoxy-D-xylulose 5-phosphate site.

Belongs to the ThiG family. Homotetramer. Forms heterodimers with either ThiH or ThiS.

It localises to the cytoplasm. The enzyme catalyses [ThiS sulfur-carrier protein]-C-terminal-Gly-aminoethanethioate + 2-iminoacetate + 1-deoxy-D-xylulose 5-phosphate = [ThiS sulfur-carrier protein]-C-terminal Gly-Gly + 2-[(2R,5Z)-2-carboxy-4-methylthiazol-5(2H)-ylidene]ethyl phosphate + 2 H2O + H(+). Its pathway is cofactor biosynthesis; thiamine diphosphate biosynthesis. Functionally, catalyzes the rearrangement of 1-deoxy-D-xylulose 5-phosphate (DXP) to produce the thiazole phosphate moiety of thiamine. Sulfur is provided by the thiocarboxylate moiety of the carrier protein ThiS. In vitro, sulfur can be provided by H(2)S. In Erwinia tasmaniensis (strain DSM 17950 / CFBP 7177 / CIP 109463 / NCPPB 4357 / Et1/99), this protein is Thiazole synthase.